Here is a 178-residue protein sequence, read N- to C-terminus: Large ribosomal subunit protein uL5 (178 aa).

Belongs to the universal ribosomal protein uL5 family. In terms of assembly, part of the 50S ribosomal subunit; part of the 5S rRNA/L5/L18/L25 subcomplex. Contacts the 5S rRNA and the P site tRNA. Forms a bridge to the 30S subunit in the 70S ribosome.

Its function is as follows. This is one of the proteins that bind and probably mediate the attachment of the 5S RNA into the large ribosomal subunit, where it forms part of the central protuberance. In the 70S ribosome it contacts protein S13 of the 30S subunit (bridge B1b), connecting the 2 subunits; this bridge is implicated in subunit movement. Contacts the P site tRNA; the 5S rRNA and some of its associated proteins might help stabilize positioning of ribosome-bound tRNAs. The sequence is that of Large ribosomal subunit protein uL5 from Prochlorococcus marinus subsp. pastoris (strain CCMP1986 / NIES-2087 / MED4).